Reading from the N-terminus, the 200-residue chain is 3-isopropylmalate dehydratase small subunit (200 aa).

It belongs to the LeuD family. LeuD type 1 subfamily. As to quaternary structure, heterodimer of LeuC and LeuD.

It catalyses the reaction (2R,3S)-3-isopropylmalate = (2S)-2-isopropylmalate. Its pathway is amino-acid biosynthesis; L-leucine biosynthesis; L-leucine from 3-methyl-2-oxobutanoate: step 2/4. Its function is as follows. Catalyzes the isomerization between 2-isopropylmalate and 3-isopropylmalate, via the formation of 2-isopropylmaleate. The sequence is that of 3-isopropylmalate dehydratase small subunit from Haemophilus influenzae (strain PittEE).